A 125-amino-acid polypeptide reads, in one-letter code: Large ribosomal subunit protein bL20 (125 aa).

The protein belongs to the bacterial ribosomal protein bL20 family.

Its function is as follows. Binds directly to 23S ribosomal RNA and is necessary for the in vitro assembly process of the 50S ribosomal subunit. It is not involved in the protein synthesizing functions of that subunit. This chain is Large ribosomal subunit protein bL20, found in Methylobacterium sp. (strain 4-46).